Reading from the N-terminus, the 245-residue chain is tRNA pseudouridine synthase A (245 aa).

The active-site Nucleophile is aspartate 52. Tyrosine 111 contacts substrate.

This sequence belongs to the tRNA pseudouridine synthase TruA family. As to quaternary structure, homodimer.

It carries out the reaction uridine(38/39/40) in tRNA = pseudouridine(38/39/40) in tRNA. In terms of biological role, formation of pseudouridine at positions 38, 39 and 40 in the anticodon stem and loop of transfer RNAs. This is tRNA pseudouridine synthase A from Rickettsia canadensis (strain McKiel).